The primary structure comprises 440 residues: Histidinol dehydrogenase (440 aa).

NAD(+)-binding residues include Tyr139, Gln201, and Asn224. Positions 247, 269, and 272 each coordinate substrate. Positions 269 and 272 each coordinate Zn(2+). Residues Glu337 and His338 each act as proton acceptor in the active site. His338, Asp371, Glu425, and His430 together coordinate substrate. Asp371 contributes to the Zn(2+) binding site. Residue His430 coordinates Zn(2+).

Belongs to the histidinol dehydrogenase family. Zn(2+) is required as a cofactor.

It carries out the reaction L-histidinol + 2 NAD(+) + H2O = L-histidine + 2 NADH + 3 H(+). The protein operates within amino-acid biosynthesis; L-histidine biosynthesis; L-histidine from 5-phospho-alpha-D-ribose 1-diphosphate: step 9/9. Its function is as follows. Catalyzes the sequential NAD-dependent oxidations of L-histidinol to L-histidinaldehyde and then to L-histidine. The chain is Histidinol dehydrogenase from Prochlorococcus marinus (strain MIT 9312).